Here is a 270-residue protein sequence, read N- to C-terminus: UPF0354 protein BT9727_4425 (270 aa).

The protein belongs to the UPF0354 family.

This Bacillus thuringiensis subsp. konkukian (strain 97-27) protein is UPF0354 protein BT9727_4425.